A 298-amino-acid polypeptide reads, in one-letter code: Probable alpha-L-glutamate ligase 2 (298 aa).

The ATP-grasp domain maps to 104-287 (MQLLSRQGIG…VADAIICFME (184 aa)). ATP-binding positions include Lys-141, 178–179 (EY), Asp-187, and 211–213 (RSN). Residues Asp-248, Glu-260, and Asn-262 each contribute to the Mg(2+) site. Residues Asp-248, Glu-260, and Asn-262 each contribute to the Mn(2+) site.

The protein belongs to the RimK family. Requires Mg(2+) as cofactor. It depends on Mn(2+) as a cofactor.

This is Probable alpha-L-glutamate ligase 2 from Shewanella frigidimarina (strain NCIMB 400).